Consider the following 87-residue polypeptide: MAKFAAIVLLILVASATVNAVKEHDELPTTGMSRKILLQPVFKSLIISIAEGQQCVKKDELCIPYYLDCCEPLECKKVNWWDHKCIG.

The first 20 residues, 1–20 (MAKFAAIVLLILVASATVNA), serve as a signal peptide directing secretion. Residues 21-52 (VKEHDELPTTGMSRKILLQPVFKSLIISIAEG) constitute a propeptide that is removed on maturation. Pyrrolidone carboxylic acid is present on Gln53. Cystine bridges form between Cys55–Cys70, Cys62–Cys75, and Cys69–Cys85.

In terms of tissue distribution, expressed in leaves (at protein level).

Peptide that strongly, but reversibly, suppresses the sweet taste-response to various sweeteners, including sugars, sweet amino acids and the artificial sweetener saccharin. In rodents, potentially binds to a sweet taste receptor present on apical microvilli of a subset of taste bud cells. Highly effective at blocking the sweet taste-response in rodents such as rats and mice, though mice may possess a mix of gurmarin-sensitive and -insensitive receptors. Has almost no effect on the sweet taste-response in humans. Inhibits Staphylococcus aureus biofilm formation without affecting bacterial viability. May be one of at least 9 different disulfide-rich peptides produced with varying properties. This chain is Pro-gurmarin, found in Gymnema sylvestre (Gurmar).